The following is a 303-amino-acid chain: MKKIKCALIGPGNIGTDLLAKLKRSSVLEPVWMVGIDPESEGLKRARELGVKTTAEGVDGLLPHVLADGVQIAFDATSAYVHAENARKLNALGVMMIDLTPAAIGPYCVPPVNLKEHLGKREMNVNMVTCGGQATIPMVAAVSRVQPVAYAEIVATVSSRSVGPGTRKNIDEFTRTTAGAVEKVGGARKGKAIIIINPAEPPLMMRDTIHCLTETEPDQQRITESIHAMIEEVQKYVPGYRLVNGPVFDGKRVTVFMEVAGLGDYLPTYAGNLDIMTAAAARTAEMFAEEMIAGNLTLEPVVA.

The active-site Acyl-thioester intermediate is C130. Residues S161–N169 and N272 each bind NAD(+).

It belongs to the acetaldehyde dehydrogenase family.

It catalyses the reaction acetaldehyde + NAD(+) + CoA = acetyl-CoA + NADH + H(+). This Burkholderia vietnamiensis (strain G4 / LMG 22486) (Burkholderia cepacia (strain R1808)) protein is Acetaldehyde dehydrogenase 2.